Consider the following 217-residue polypeptide: MQIENRLNAAAASGDGLGNLAGRSADPTGAADKGESGVPVPPTGFVDPTPRISLSADALLYLGRAKRTPEKLPPLTKDEWNNRLSPQLAAREHQAFGRLAETGDYRAYYRAFIDYYDGLRPEDQNSLRYFGTREAAVAGLRSLDYDADSGLDMDAEFENLVSVFLEEDKIAPSPATTTMSPAERAFFAWDASNISYEVDAPEPRPMTEIERLYSELL.

Residues G14 to T49 are disordered.

Its function is as follows. May be part of a system that R.meliloti uses to respond to plant (alfalfa) biotin signals. The sequence is that of Biotin transport regulator (bioS) from Rhizobium meliloti (strain 1021) (Ensifer meliloti).